A 299-amino-acid chain; its full sequence is Oxygen-dependent coproporphyrinogen-III oxidase (299 aa).

Ser-92 is a substrate binding site. A divalent metal cation contacts are provided by His-96 and His-106. Catalysis depends on His-106, which acts as the Proton donor. A substrate-binding site is contributed by 108-110; sequence NVR. Positions 145 and 175 each coordinate a divalent metal cation. Positions 240–275 are important for dimerization; the sequence is YVEFNLVWDRGTLFGLQTGGRTESILMSMPPLVRWE. 258–260 lines the substrate pocket; that stretch reads GGR.

Belongs to the aerobic coproporphyrinogen-III oxidase family. Homodimer. A divalent metal cation is required as a cofactor.

The protein localises to the cytoplasm. The enzyme catalyses coproporphyrinogen III + O2 + 2 H(+) = protoporphyrinogen IX + 2 CO2 + 2 H2O. Its pathway is porphyrin-containing compound metabolism; protoporphyrin-IX biosynthesis; protoporphyrinogen-IX from coproporphyrinogen-III (O2 route): step 1/1. In terms of biological role, involved in the heme biosynthesis. Catalyzes the aerobic oxidative decarboxylation of propionate groups of rings A and B of coproporphyrinogen-III to yield the vinyl groups in protoporphyrinogen-IX. The protein is Oxygen-dependent coproporphyrinogen-III oxidase of Salmonella paratyphi B (strain ATCC BAA-1250 / SPB7).